The primary structure comprises 223 residues: Ribonuclease T (223 aa).

The 175-residue stretch at 20–194 folds into the Exonuclease domain; sequence VVIDVETAGF…YDTNQTALLF (175 aa). Positions 23, 25, 181, and 186 each coordinate Mg(2+). Histidine 181 functions as the Proton donor/acceptor in the catalytic mechanism.

This sequence belongs to the RNase T family. Homodimer. It depends on Mg(2+) as a cofactor.

Functionally, trims short 3' overhangs of a variety of RNA species, leaving a one or two nucleotide 3' overhang. Responsible for the end-turnover of tRNA: specifically removes the terminal AMP residue from uncharged tRNA (tRNA-C-C-A). Also appears to be involved in tRNA biosynthesis. The chain is Ribonuclease T from Pectobacterium atrosepticum (strain SCRI 1043 / ATCC BAA-672) (Erwinia carotovora subsp. atroseptica).